The following is an 81-amino-acid chain: MDSTVAAASVIAAALAVGLGAIGPGIGQGNASGQAVSGIARQPEAEGKIRGTLLLTLAFMESLTIYGLVIALVLLFANPFA.

A run of 2 helical transmembrane segments spans residues 6–26 (AAAS…GPGI) and 57–77 (LAFM…LLFA).

The protein belongs to the ATPase C chain family. In terms of assembly, F-type ATPases have 2 components, F(1) - the catalytic core - and F(0) - the membrane proton channel. F(1) has five subunits: alpha(3), beta(3), gamma(1), delta(1), epsilon(1). F(0) has four main subunits: a(1), b(1), b'(1) and c(10-14). The alpha and beta chains form an alternating ring which encloses part of the gamma chain. F(1) is attached to F(0) by a central stalk formed by the gamma and epsilon chains, while a peripheral stalk is formed by the delta, b and b' chains.

It localises to the cellular thylakoid membrane. Functionally, f(1)F(0) ATP synthase produces ATP from ADP in the presence of a proton or sodium gradient. F-type ATPases consist of two structural domains, F(1) containing the extramembraneous catalytic core and F(0) containing the membrane proton channel, linked together by a central stalk and a peripheral stalk. During catalysis, ATP synthesis in the catalytic domain of F(1) is coupled via a rotary mechanism of the central stalk subunits to proton translocation. Key component of the F(0) channel; it plays a direct role in translocation across the membrane. A homomeric c-ring of between 10-14 subunits forms the central stalk rotor element with the F(1) delta and epsilon subunits. This chain is ATP synthase subunit c, found in Synechocystis sp. (strain ATCC 27184 / PCC 6803 / Kazusa).